Here is a 212-residue protein sequence, read N- to C-terminus: MNSQQCVIIGIAGASASGKSLIAKTIYEELCRDLGTDQIGVIAEDAYYRDQSHLSMEERVKTNYDHPKAMDHELLAQHLRSLKEGDSVEIPVYSYTEHTRMSDTRTMTPKKVIILEGILLLTDPHLRDLMDASVFMDTPLDICFLRRLTRDVAERGRTMESVISQYQKTVRPMFLQFIEPSKQYADIIVPRGGKNRIATDILKARIQHLLAK.

An ATP-binding site is contributed by 13-20; sequence GASASGKS.

This sequence belongs to the uridine kinase family.

It localises to the cytoplasm. It carries out the reaction uridine + ATP = UMP + ADP + H(+). It catalyses the reaction cytidine + ATP = CMP + ADP + H(+). It functions in the pathway pyrimidine metabolism; CTP biosynthesis via salvage pathway; CTP from cytidine: step 1/3. The protein operates within pyrimidine metabolism; UMP biosynthesis via salvage pathway; UMP from uridine: step 1/1. This is Uridine kinase from Shewanella amazonensis (strain ATCC BAA-1098 / SB2B).